The following is a 307-amino-acid chain: Methionyl-tRNA formyltransferase (307 aa).

(6S)-5,6,7,8-tetrahydrofolate is bound at residue 110 to 113 (SLLP).

It belongs to the Fmt family.

It carries out the reaction L-methionyl-tRNA(fMet) + (6R)-10-formyltetrahydrofolate = N-formyl-L-methionyl-tRNA(fMet) + (6S)-5,6,7,8-tetrahydrofolate + H(+). Attaches a formyl group to the free amino group of methionyl-tRNA(fMet). The formyl group appears to play a dual role in the initiator identity of N-formylmethionyl-tRNA by promoting its recognition by IF2 and preventing the misappropriation of this tRNA by the elongation apparatus. The polypeptide is Methionyl-tRNA formyltransferase (Chromobacterium violaceum (strain ATCC 12472 / DSM 30191 / JCM 1249 / CCUG 213 / NBRC 12614 / NCIMB 9131 / NCTC 9757 / MK)).